Reading from the N-terminus, the 189-residue chain is MKCWTLGDRVLAVSMGDLTKVRAEAVVNPANSLMIMGGGAAGALKRAGGSVIEEEAMRKAPVPVGEAVITSGGSLPARFVIHAPTMEEPGMRIPLVNAFKASYAALRLASEAGIESVAMPAMGAGVGGLSVAEVAREAAMAASILRGKWPRYIILVARGEEAYRGMEKGVREALGVEGGECPADLARLV.

One can recognise a Macro domain in the interval 1 to 174; the sequence is MKCWTLGDRV…GMEKGVREAL (174 aa).

This is an uncharacterized protein from Aeropyrum pernix (strain ATCC 700893 / DSM 11879 / JCM 9820 / NBRC 100138 / K1).